Here is a 202-residue protein sequence, read N- to C-terminus: Protein cuti-1 (202 aa).

Residues 1–37 are Cytoplasmic-facing; it reads MPNDRVAPLPPNFVYSPHDKFYYAPATCNSMHYTTAS. The helical transmembrane segment at 38–58 threads the bilayer; it reads YISAFIEFLVMGTGAICFYVM. Over 59–68 the chain is Extracellular; sequence SHKSDSIGKW. The chain crosses the membrane as a helical span at residues 69-89; sequence LFYIQAGITVLSLLTSALMAF. The Cytoplasmic segment spans residues 90 to 107; it reads GLWKENPQMLGSKLKFIE. Residues 108-128 traverse the membrane as a helical segment; it reads FIICFLLIWAVISIVCMAFGI. At 129–148 the chain is on the extracellular side; sequence QFTRQVFGIFGKVHRIEQDY. The helical transmembrane segment at 149–169 threads the bilayer; it reads GPIWPFNIAVVSFFTAAIAIW. At 170–202 the chain is on the cytoplasmic side; it reads TRIIIQGAADYLYDKAYFADKQNVELRESSKTR.

In terms of assembly, interacts with vps-39.

The protein resides in the cell membrane. It is found in the cytoplasm. Its function is as follows. Involved in cuticle formation and ensures cuticle shedding during larval development. Plays a role in maintaining the hypodermis. In association with vps-39, may play a role in vesicle tethering. This chain is Protein cuti-1, found in Caenorhabditis elegans.